The primary structure comprises 511 residues: Synaptotagmin-6 (511 aa).

The Vesicular portion of the chain corresponds to 1 to 59; the sequence is MSGVWGAGGPRCQAALAVLASLCRARPPPLGLDVETCQSFELQPPEQSPSAADSGTSVS. Residues 12–38 are cysteine motif; it reads CQAALAVLASLCRARPPPLGLDVETCQ. The chain crosses the membrane as a helical span at residues 60–80; the sequence is LLAVVVIVCGVALVAVFFFLF. Topologically, residues 81–511 are cytoplasmic; sequence WKLCWMPWRN…KSFKEGTPRL (431 aa). Positions 93-103 are enriched in low complexity; the sequence is ASSPSSANPAS. 2 disordered regions span residues 93–118 and 157–182; these read ASSP…MADK and TKLQ…LPRQ. A compositionally biased stretch (polar residues) spans 160-172; sequence QRQTTEPASSTRH. S217 bears the Phosphoserine mark. C2 domains lie at 230–351 and 362–495; these read SCGK…SIWK and DLGE…AHWH. 11 residues coordinate Ca(2+): D261, D267, D319, F320, D321, S324, D327, D393, D399, D453, and D455. The necessary for cell membrane association (isoform 2) stretch occupies residues 483–511; that stretch reads MLAYPRKPIAHWHCLAEVKKSFKEGTPRL.

The protein belongs to the synaptotagmin family. Isoform 1: Homodimer; disulfide-linked via the cysteine motif. Isoform 1: Can also form heterodimers with SYT3, SYT7, SYT9 and SYT10. Isoform 1: Interacts with STX1A, STX1B and STX2; the interaction is Ca(2+)-dependent. Isoform 2: Is not able to form homodimer and heterodimers. Ca(2+) serves as cofactor.

The protein resides in the cytoplasmic vesicle. It localises to the secretory vesicle. The protein localises to the synaptic vesicle membrane. It is found in the membrane. Its subcellular location is the cytoplasm. The protein resides in the cytosol. It localises to the cell membrane. Functionally, may be involved in Ca(2+)-dependent exocytosis of secretory vesicles through Ca(2+) and phospholipid binding to the C2 domain or may serve as Ca(2+) sensors in the process of vesicular trafficking and exocytosis. May mediate Ca(2+)-regulation of exocytosis in acrosomal reaction in sperm. The polypeptide is Synaptotagmin-6 (Syt6) (Rattus norvegicus (Rat)).